We begin with the raw amino-acid sequence, 252 residues long: Triosephosphate isomerase (252 aa).

Asn9 to Lys11 is a binding site for substrate. His95 functions as the Electrophile in the catalytic mechanism. Glu167 serves as the catalytic Proton acceptor. Residues Gly173, Ser213, and Gly234 to Gly235 contribute to the substrate site.

This sequence belongs to the triosephosphate isomerase family. In terms of assembly, homodimer.

The protein localises to the cytoplasm. The catalysed reaction is D-glyceraldehyde 3-phosphate = dihydroxyacetone phosphate. It participates in carbohydrate biosynthesis; gluconeogenesis. It functions in the pathway carbohydrate degradation; glycolysis; D-glyceraldehyde 3-phosphate from glycerone phosphate: step 1/1. Its function is as follows. Involved in the gluconeogenesis. Catalyzes stereospecifically the conversion of dihydroxyacetone phosphate (DHAP) to D-glyceraldehyde-3-phosphate (G3P). The chain is Triosephosphate isomerase from Lactiplantibacillus plantarum (strain ATCC BAA-793 / NCIMB 8826 / WCFS1) (Lactobacillus plantarum).